The chain runs to 589 residues: Probable translation initiation factor IF-2 (589 aa).

The 222-residue stretch at 4-225 (VRSPFVVVMG…AGVSQRFIPR (222 aa)) folds into the tr-type G domain. Residues 13–20 (GHVDVGKT) are G1. 13–20 (GHVDVGKT) lines the GTP pocket. A G2 region spans residues 38 to 42 (MITQH). The segment at 79-82 (DTPG) is G3. GTP contacts are provided by residues 79–83 (DTPGH) and 133–136 (NKLD). A G4 region spans residues 133-136 (NKLD). The interval 201 to 203 (SAV) is G5.

Belongs to the TRAFAC class translation factor GTPase superfamily. Classic translation factor GTPase family. IF-2 subfamily.

Function in general translation initiation by promoting the binding of the formylmethionine-tRNA to ribosomes. Seems to function along with eIF-2. In Pyrobaculum aerophilum (strain ATCC 51768 / DSM 7523 / JCM 9630 / CIP 104966 / NBRC 100827 / IM2), this protein is Probable translation initiation factor IF-2.